The sequence spans 1027 residues: Contactin-5 (1027 aa).

Residues 1 to 19 form the signal peptide; that stretch reads MMWLSWKLFLFLSLIGCLS. 6 consecutive Ig-like C2-type domains span residues 32-117, 123-209, 227-307, 317-401, 407-494, and 498-593; these read PDDV…AVLQ, NFSG…RVLS, PKIE…RNVF, PQWV…AELK, PTFP…ASVS, and PTRI…TELL. Residues cysteine 50 and cysteine 100 are joined by a disulfide bond. N-linked (GlcNAc...) asparagine glycans are attached at residues asparagine 65 and asparagine 123. 2 disulfides stabilise this stretch: cysteine 144-cysteine 196 and cysteine 249-cysteine 296. N-linked (GlcNAc...) asparagine glycans are attached at residues asparagine 324, asparagine 376, and asparagine 467. Cystine bridges form between cysteine 338-cysteine 385, cysteine 430-cysteine 478, and cysteine 520-cysteine 577. 4 Fibronectin type-III domains span residues 600-698, 703-800, 805-899, and 901-994; these read PPGV…TNEA, PPAN…SAEG, APID…TKKS, and PSQA…SYAG. Residues asparagine 706, asparagine 743, asparagine 858, and asparagine 929 are each glycosylated (N-linked (GlcNAc...) asparagine). A lipid anchor (GPI-anchor amidated serine) is attached at serine 999. Residues 1000–1027 constitute a propeptide, removed in mature form; sequence AQSTLHMFSTSSSSVTLLLVLMVPSTSW.

It belongs to the immunoglobulin superfamily. Contactin family. As to quaternary structure, interacts with INgCAM/L1 and the tenascin-R TNP protein. Does not interacts with NrCAM. In terms of tissue distribution, expressed by subpopulations of Purkinje cells in the cerebellum. Also expressed by one type of Purkinje cell afferents, the climbing fibers.

The protein resides in the cell membrane. Contactins mediate cell surface interactions during nervous system development. May contribute to the formation of somatotopic maps of cerebellar afferents during the development of the nervous system. This chain is Contactin-5 (CNTN5), found in Gallus gallus (Chicken).